The chain runs to 619 residues: Interferon-activable protein 204 (619 aa).

The region spanning 1 to 88 (MVNEYKRIVL…AEILKKERSE (88 aa)) is the Pyrin domain. A Nuclear export signal motif is present at residues 24–35 (LFKSLLARDLNL). Positions 86 to 99 (RSEVTGETSLEKNG) are enriched in basic and acidic residues. The tract at residues 86-223 (RSEVTGETSL…QNQNIPRGAV (138 aa)) is disordered. The segment covering 122 to 153 (TSATQEETSTAQAGTSTAQARTSTAQAGTSTA) has biased composition (low complexity). 3 consecutive repeat copies span residues 134 to 140 (AGTSTAQ), 141 to 147 (ARTSTAQ), and 148 to 154 (AGTSTAQ). The 3 X 7 AA tandem repeats of A-[GR]-T-S-T-A-Q stretch occupies residues 134-154 (AGTSTAQARTSTAQAGTSTAQ). The Nuclear localization signal signature appears at 150–157 (TSTAQKRK). The segment covering 159 to 176 (MREEETGVKKSKAAKEPD) has biased composition (basic and acidic residues). Residues 190 to 206 (SPILHSSSSASSNIPSA) are compositionally biased toward low complexity. Positions 207–218 (KNQKSQPQNQNI) are enriched in polar residues. HIN-200 domains follow at residues 213–413 (PQNQ…IKIS) and 417–615 (NVPK…MQVI). The interaction with ID2 stretch occupies residues 550 to 614 (KKTERNKFIY…RSVRHSYMQV (65 aa)).

Belongs to the HIN-200 family. Interacts with UBTF. Interacts with RUNX2. Interacts with ID1, ID2 and ID3. Interacts with STING. In terms of processing, acetylated upon bacterial infection, leading to translocation from nucleus to cytoplasm and subsequent recruitment of STING to activate IFN-beta production. In terms of tissue distribution, present in osteoblasts (at protein level).

Its subcellular location is the nucleus. It is found in the nucleolus. The protein localises to the cytoplasm. Interferon-stimulated protein that plays a role in several biological processes including cell differentiation, autophagy and innate immunity. Cooperates with CGAS to sense dsDNA and activates the STING-dependent type I IFN pathway. Mechanistically, gets acetylated upon bacterial infection and then translocates from nucleus into cytoplasm to recruit STING for activation of TBK1-dependent IRF3 nuclear translocation and IFN-beta release. Inhibits the transcription of ribosomal RNA. May inhibit DNA binding by UBTF. Inhibits cell growth via p53/TP53 and RB1-dependent and independent pathways. Acts as a coactivator of RUNX2 during osteogenesis. May be involved in macrophage differentiation. Enables skeletal muscle and cardiac myocyte differentiation by sequestring Id proteins in the cytosol and promoting their ubiquitination and subsequent degradation. In Mus musculus (Mouse), this protein is Interferon-activable protein 204 (Ifi204).